The following is a 386-amino-acid chain: Acetate kinase (386 aa).

Asn9 contacts Mg(2+). ATP is bound at residue Lys16. A substrate-binding site is contributed by Arg74. Asp131 serves as the catalytic Proton donor/acceptor. ATP is bound by residues 191 to 195 (HLGNG), 265 to 267 (DFR), and 313 to 317 (GVGEN). Glu367 contributes to the Mg(2+) binding site.

This sequence belongs to the acetokinase family. As to quaternary structure, homodimer. Mg(2+) serves as cofactor. It depends on Mn(2+) as a cofactor.

The protein localises to the cytoplasm. It catalyses the reaction acetate + ATP = acetyl phosphate + ADP. It participates in metabolic intermediate biosynthesis; acetyl-CoA biosynthesis; acetyl-CoA from acetate: step 1/2. Functionally, catalyzes the formation of acetyl phosphate from acetate and ATP. Can also catalyze the reverse reaction. The polypeptide is Acetate kinase (Mycolicibacterium gilvum (strain PYR-GCK) (Mycobacterium gilvum (strain PYR-GCK))).